The sequence spans 146 residues: Large ribosomal subunit protein uL13 (146 aa).

The protein belongs to the universal ribosomal protein uL13 family. In terms of assembly, part of the 50S ribosomal subunit.

This protein is one of the early assembly proteins of the 50S ribosomal subunit, although it is not seen to bind rRNA by itself. It is important during the early stages of 50S assembly. This is Large ribosomal subunit protein uL13 from Methylobacillus flagellatus (strain ATCC 51484 / DSM 6875 / VKM B-1610 / KT).